The following is a 128-amino-acid chain: Probable 4-amino-4-deoxy-L-arabinose-phosphoundecaprenol flippase subunit ArnF (128 aa).

Residues 1–2 lie on the Cytoplasmic side of the membrane; it reads MG. The helical transmembrane segment at 3 to 23 threads the bilayer; the sequence is LIWGLFSVIIASVAQLSLGFA. Residues 24–35 lie on the Periplasmic side of the membrane; it reads ASHLPPMTHLWD. Residues 36–56 form a helical membrane-spanning segment; the sequence is FIAALLAFGLDARILLLGLLG. Residues 57–76 lie on the Cytoplasmic side of the membrane; that stretch reads YLLSVFCWYKTLHKLALSKA. The chain crosses the membrane as a helical span at residues 77–97; that stretch reads YALLSMSYVLVWIASMVLPGW. Topologically, residues 98 to 100 are periplasmic; that stretch reads EGT. Residues 101–121 traverse the membrane as a helical segment; that stretch reads FSLKALLGVACIMSGLMLIFL. Over 122–128 the chain is Cytoplasmic; that stretch reads PTTKQRY.

This sequence belongs to the ArnF family. In terms of assembly, heterodimer of ArnE and ArnF.

It is found in the cell inner membrane. It participates in bacterial outer membrane biogenesis; lipopolysaccharide biosynthesis. In terms of biological role, translocates 4-amino-4-deoxy-L-arabinose-phosphoundecaprenol (alpha-L-Ara4N-phosphoundecaprenol) from the cytoplasmic to the periplasmic side of the inner membrane. This Shigella boydii serotype 4 (strain Sb227) protein is Probable 4-amino-4-deoxy-L-arabinose-phosphoundecaprenol flippase subunit ArnF.